The following is a 104-amino-acid chain: Protein EPIDERMAL PATTERNING FACTOR 1 (104 aa).

An N-terminal signal peptide occupies residues 1-20; sequence MKSLLLLAFFLSFFFGSLLA. Disulfide bonds link Cys60/Cys94, Cys64/Cys70, Cys67/Cys96, and Cys79/Cys88. Asn98 carries an N-linked (GlcNAc...) asparagine glycan.

The protein belongs to the plant cysteine rich small secretory peptide family. Epidermal patterning factor subfamily. Interacts with ERECTA and ERL1, but not with TMM. In terms of tissue distribution, expressed in shoots, but not in roots. Mostly localized in developing leaves, specifically in meristemoids, guard mother cells (GMCs), and young guard cells.

It is found in the secreted. In terms of biological role, controls stomatal patterning. Regulates asymmetric cell division during guard cell differentiation. Mediates stomatal development inhibition. Not cleaved by the protease CRSP (AC Q9LNU1). MEPF1: mobile signal controlling stomatal development in a non-cell-autonomous manner. Uses ERL1 as major receptor. May act by competing with somatogen (AC Q9SV72) for the same receptor, TMM (AC Q9SSD1). This chain is Protein EPIDERMAL PATTERNING FACTOR 1, found in Arabidopsis thaliana (Mouse-ear cress).